The primary structure comprises 508 residues: Carboxypeptidase Y homolog ARB_05721 (508 aa).

The N-terminal stretch at 1–25 (MELYLNMLSFWYILLATSFFGPSQA) is a signal peptide. Asn132 and Asn169 each carry an N-linked (GlcNAc...) asparagine glycan. Ser204 is a catalytic residue. Asn268 carries an N-linked (GlcNAc...) asparagine glycan. 3 cysteine pairs are disulfide-bonded: Cys282/Cys305, Cys289/Cys298, and Cys332/Cys338. Residue Asp410 is part of the active site. Cys413 contributes to the substrate binding site. N-linked (GlcNAc...) asparagine glycosylation occurs at Asn451. The active site involves His484. Residue Met485 participates in substrate binding.

The protein belongs to the peptidase S10 family.

It localises to the secreted. It catalyses the reaction Release of a C-terminal amino acid with broad specificity.. Its function is as follows. Involved in degradation of small peptides. In Arthroderma benhamiae (strain ATCC MYA-4681 / CBS 112371) (Trichophyton mentagrophytes), this protein is Carboxypeptidase Y homolog ARB_05721.